The primary structure comprises 106 residues: Nucleoid-associated protein bll8115 (106 aa).

Belongs to the YbaB/EbfC family. In terms of assembly, homodimer.

It is found in the cytoplasm. The protein resides in the nucleoid. Functionally, binds to DNA and alters its conformation. May be involved in regulation of gene expression, nucleoid organization and DNA protection. The chain is Nucleoid-associated protein bll8115 from Bradyrhizobium diazoefficiens (strain JCM 10833 / BCRC 13528 / IAM 13628 / NBRC 14792 / USDA 110).